We begin with the raw amino-acid sequence, 425 residues long: Adenylosuccinate synthetase (425 aa).

GTP contacts are provided by residues 12 to 18 (GDEGKGK) and 40 to 42 (GHT). The active-site Proton acceptor is the Asp13. Residues Asp13 and Gly40 each coordinate Mg(2+). IMP is bound by residues 13 to 16 (DEGK), 38 to 41 (NAGH), Thr130, Arg144, Gln224, Thr239, and Arg301. Residue His41 is the Proton donor of the active site. Position 297-303 (297-303 (TVSNRRR)) interacts with substrate. GTP contacts are provided by residues Arg303, 329 to 331 (KLD), and 411 to 413 (STS).

This sequence belongs to the adenylosuccinate synthetase family. Homodimer. Requires Mg(2+) as cofactor.

Its subcellular location is the cytoplasm. It catalyses the reaction IMP + L-aspartate + GTP = N(6)-(1,2-dicarboxyethyl)-AMP + GDP + phosphate + 2 H(+). It participates in purine metabolism; AMP biosynthesis via de novo pathway; AMP from IMP: step 1/2. Functionally, plays an important role in the de novo pathway of purine nucleotide biosynthesis. Catalyzes the first committed step in the biosynthesis of AMP from IMP. This Wolbachia sp. subsp. Drosophila simulans (strain wRi) protein is Adenylosuccinate synthetase.